The following is a 221-amino-acid chain: UPF0502 protein PSPTO_2686 (221 aa).

It belongs to the UPF0502 family.

In Pseudomonas syringae pv. tomato (strain ATCC BAA-871 / DC3000), this protein is UPF0502 protein PSPTO_2686.